We begin with the raw amino-acid sequence, 1337 residues long: Protein cordon-bleu (1337 aa).

The segment at 1-41 (MDAPRALAAKPPTGRKMKARAPPPPGKPAAQNVHSEQKLPH) is disordered. 6 positions are modified to phosphoserine: serine 47, serine 50, serine 212, serine 235, serine 272, and serine 294. Disordered regions lie at residues 260 to 556 (SKAE…NDDE) and 647 to 768 (IASQ…HHGQ). Residues 288–317 (CVTTPNSPSLHSRSLTLGPSLSLGNISGVS) are compositionally biased toward polar residues. The short motif at 323–328 (KKRRAP) is the KKRRAP 1 element. Phosphoserine occurs at positions 346 and 349. The short motif at 356 to 361 (KKRRAP) is the KKRRAP 2 element. Residues 361-374 (PAPPPPQQPPPSPV) show a composition bias toward pro residues. Serine 372 is modified (phosphoserine). A compositionally biased stretch (basic and acidic residues) spans 377-387 (NRKEDKEENRK). Residues 411 to 423 (LVLPPPPPYPPPD) show a composition bias toward pro residues. Positions 469 to 480 (ESEETASEDTTE) are enriched in acidic residues. A compositionally biased stretch (polar residues) spans 484-500 (VMSSPSDAISLDSQQDS). Threonine 522 carries the post-translational modification Phosphothreonine. A compositionally biased stretch (low complexity) spans 526–541 (GPQKSPSWGKSGSGSS). 2 stretches are compositionally biased toward polar residues: residues 647–666 (IASQ…QPFV) and 687–710 (QPTL…TSLV). The residue at position 649 (serine 649) is a Phosphoserine. The segment covering 714-736 (LIDDPKAKDKGKVHGSSHSEKTQ) has biased composition (basic and acidic residues). Position 816 is a phosphoserine (serine 816). Disordered regions lie at residues 892 to 923 (TPQQ…SVKV) and 967 to 991 (KATT…DDAA). Phosphoserine is present on serine 1038. Over residues 1070–1090 (GFNEKQTTSNQKANSTSNFSQ) the composition is skewed to polar residues. Disordered stretches follow at residues 1070 to 1094 (GFNE…ALDK), 1113 to 1133 (MNGS…KEST), 1145 to 1168 (KPSS…FGPK), and 1192 to 1221 (AIHS…SYVE). The residue at position 1128 (serine 1128) is a Phosphoserine. WH2 domains follow at residues 1185 to 1205 (LHSA…LRKT) and 1225 to 1245 (ERSA…LRKV). Positions 1197–1214 (GGREKLRKTAEQTSEGRP) are enriched in basic and acidic residues. Residues 1262–1310 (GAPGLDKPQQEDLGLPPPPALPPPPAPAPQAPSASVTVSRFSTGTPSNS) are disordered. Pro residues predominate over residues 1276-1291 (LPPPPALPPPPAPAPQ). Over residues 1297 to 1310 (VTVSRFSTGTPSNS) the composition is skewed to polar residues. Serine 1303 carries the post-translational modification Phosphoserine. Residues 1313–1333 (ARQALMDAIRSGTGAARLRKV) form the WH2 3 domain.

In terms of assembly, identified in a complex composed of COBL, PACSIN1 and WASL. Interacts with PACSIN1, PACSIN2 and PACSIN3. Identified in a complex composed of ACTA1, COBL, GSN and TMSB4X. Interacts (via WH2 domains) with actin monomers. Interacts with DBNL. As to expression, detected in brain cortex and in the Purkinje cell layer in the cerebellum. Detected in hippocampus neurons, and at lower levels in testis, lung and spleen (at protein level). Detected in embryonic neural tube.

It is found in the cell membrane. Its subcellular location is the cytoplasm. The protein resides in the cytoskeleton. It localises to the cell projection. The protein localises to the ruffle. Functionally, plays an important role in the reorganization of the actin cytoskeleton. Binds to and sequesters actin monomers (G actin). Nucleates actin polymerization by assembling three actin monomers in cross-filament orientation and thereby promotes growth of actin filaments at the barbed end. Can also mediate actin depolymerization at barbed ends and severing of actin filaments. Promotes formation of cell ruffles. Regulates neuron morphogenesis and increases branching of axons and dendrites. Regulates dendrite branching in Purkinje cells. The chain is Protein cordon-bleu (Cobl) from Mus musculus (Mouse).